The primary structure comprises 516 residues: 2,3-bisphosphoglycerate-independent phosphoglycerate mutase (516 aa).

Residues aspartate 13 and serine 63 each coordinate Mn(2+). Serine 63 functions as the Phosphoserine intermediate in the catalytic mechanism. Substrate-binding positions include histidine 124, 154 to 155 (RD), arginine 186, arginine 192, 262 to 265 (RPDR), and lysine 337. Mn(2+)-binding residues include aspartate 404, histidine 408, aspartate 445, histidine 446, and histidine 464.

It belongs to the BPG-independent phosphoglycerate mutase family. In terms of assembly, monomer. The cofactor is Mn(2+).

It carries out the reaction (2R)-2-phosphoglycerate = (2R)-3-phosphoglycerate. It participates in carbohydrate degradation; glycolysis; pyruvate from D-glyceraldehyde 3-phosphate: step 3/5. Functionally, catalyzes the interconversion of 2-phosphoglycerate and 3-phosphoglycerate. The sequence is that of 2,3-bisphosphoglycerate-independent phosphoglycerate mutase from Cellvibrio japonicus (strain Ueda107) (Pseudomonas fluorescens subsp. cellulosa).